The following is a 353-amino-acid chain: Uroporphyrinogen decarboxylase (353 aa).

Substrate is bound by residues 26 to 30, aspartate 76, tyrosine 153, threonine 208, and histidine 326; that span reads RQAGR.

It belongs to the uroporphyrinogen decarboxylase family. In terms of assembly, homodimer.

It localises to the cytoplasm. It carries out the reaction uroporphyrinogen III + 4 H(+) = coproporphyrinogen III + 4 CO2. It functions in the pathway porphyrin-containing compound metabolism; protoporphyrin-IX biosynthesis; coproporphyrinogen-III from 5-aminolevulinate: step 4/4. In terms of biological role, catalyzes the decarboxylation of four acetate groups of uroporphyrinogen-III to yield coproporphyrinogen-III. This Chromohalobacter salexigens (strain ATCC BAA-138 / DSM 3043 / CIP 106854 / NCIMB 13768 / 1H11) protein is Uroporphyrinogen decarboxylase.